Reading from the N-terminus, the 243-residue chain is F-box protein pof15 (243 aa).

One can recognise an F-box domain in the interval 28–73; that stretch reads QTSSTLLPVEVIDSVMQYLPAHDVIQSSFASYPLTLIANKIIRARL.

It functions in the pathway protein modification; protein ubiquitination. Probable substrate recognition component of a SCF (SKP1-CUL1-F-box protein) E3 ubiquitin-protein ligase complex that mediates the ubiquitination and subsequent proteasomal degradation of target proteins. In Schizosaccharomyces pombe (strain 972 / ATCC 24843) (Fission yeast), this protein is F-box protein pof15 (pof15).